A 192-amino-acid polypeptide reads, in one-letter code: Erythropoietin (192 aa).

Residues 1-26 (MGVPERPTLLLLLSLLLIPLGLPVLC) form the signal peptide. Cysteines 33 and 187 form a disulfide. N-linked (GlcNAc...) asparagine glycosylation is found at N50, N64, and N109.

The protein belongs to the EPO/TPO family. Produced by kidney or liver of adult mammals and by liver of fetal or neonatal mammals.

The protein resides in the secreted. Its function is as follows. Hormone involved in the regulation of erythrocyte proliferation and differentiation and the maintenance of a physiological level of circulating erythrocyte mass. Binds to EPOR leading to EPOR dimerization and JAK2 activation thereby activating specific downstream effectors, including STAT1 and STAT3. The sequence is that of Erythropoietin (Epo) from Mus musculus (Mouse).